A 249-amino-acid chain; its full sequence is 3-deoxy-manno-octulosonate cytidylyltransferase (249 aa).

The protein belongs to the KdsB family.

It localises to the cytoplasm. It carries out the reaction 3-deoxy-alpha-D-manno-oct-2-ulosonate + CTP = CMP-3-deoxy-beta-D-manno-octulosonate + diphosphate. It participates in nucleotide-sugar biosynthesis; CMP-3-deoxy-D-manno-octulosonate biosynthesis; CMP-3-deoxy-D-manno-octulosonate from 3-deoxy-D-manno-octulosonate and CTP: step 1/1. It functions in the pathway bacterial outer membrane biogenesis; lipopolysaccharide biosynthesis. Activates KDO (a required 8-carbon sugar) for incorporation into bacterial lipopolysaccharide in Gram-negative bacteria. The protein is 3-deoxy-manno-octulosonate cytidylyltransferase of Coxiella burnetii (strain RSA 331 / Henzerling II).